Consider the following 239-residue polypeptide: Putative 3-methyladenine DNA glycosylase (239 aa).

It belongs to the DNA glycosylase MPG family.

The chain is Putative 3-methyladenine DNA glycosylase from Pseudomonas aeruginosa (strain ATCC 15692 / DSM 22644 / CIP 104116 / JCM 14847 / LMG 12228 / 1C / PRS 101 / PAO1).